The sequence spans 195 residues: Imidazoleglycerol-phosphate dehydratase (195 aa).

This sequence belongs to the imidazoleglycerol-phosphate dehydratase family.

It is found in the cytoplasm. The enzyme catalyses D-erythro-1-(imidazol-4-yl)glycerol 3-phosphate = 3-(imidazol-4-yl)-2-oxopropyl phosphate + H2O. It participates in amino-acid biosynthesis; L-histidine biosynthesis; L-histidine from 5-phospho-alpha-D-ribose 1-diphosphate: step 6/9. This chain is Imidazoleglycerol-phosphate dehydratase, found in Deinococcus deserti (strain DSM 17065 / CIP 109153 / LMG 22923 / VCD115).